The following is a 610-amino-acid chain: Modifier of mdg4 (610 aa).

The self-association stretch occupies residues 1-160; that stretch reads MADDEQFSLC…QQPRASARYK (160 aa). Residues 1–308 form an interaction with Chi region; it reads MADDEQFSLC…EEAEYIDLPM (308 aa). The region spanning 32–98 is the BTB domain; sequence VDVSLAAEGQ…MYCGEVNVKQ (67 aa). Disordered regions lie at residues 115-156, 219-259, 311-339, and 386-432; these read GLTD…PRAS, VSTN…DSTT, PTKS…DDTY, and ESSF…PKPK. The segment covering 122–135 has biased composition (pro residues); the sequence is APQPPQESSPPPAA. Over residues 136-156 the composition is skewed to low complexity; sequence PHVQQQQIPAQRVQRQQPRAS. The segment covering 222–238 has biased composition (polar residues); it reads NKRSAQRSSLTPASSSA. S230 carries the phosphoserine modification. Residues 312 to 325 are compositionally biased toward basic and acidic residues; the sequence is TKSEPDYSEDHGDA. Over residues 386-400 the composition is skewed to polar residues; the sequence is ESSFVDTSGDQGNTE. A compositionally biased stretch (low complexity) spans 401–410; it reads AQAATSASAT. Basic and acidic residues predominate over residues 422 to 432; the sequence is TKVEDQTPKPK. The FLYWCH-type zinc-finger motif lies at 452–512; it reads YASTTKGGVK…VFPYEGEHVH (61 aa). The interval 551 to 610 is interaction with su(Hw); that stretch reads LEEADDKEDEDFEEFEIQEIDEIELDEPEKTPAKEEEVDPNDFREKIKRRLQKALQNKKK. The segment covering 567 to 577 has biased composition (acidic residues); it reads IQEIDEIELDE. A disordered region spans residues 567–595; it reads IQEIDEIELDEPEKTPAKEEEVDPNDFRE. Over residues 578–595 the composition is skewed to basic and acidic residues; that stretch reads PEKTPAKEEEVDPNDFRE.

As to quaternary structure, can self-associate. Interacts with Chi. Interacts with Top2. Isoform mod2.2: Component of the gypsy chromatin insulator complex, composed of Cp190, mod(mdg4) and su(Hw). The gypsy chromatin insulator complex interacts with Topors via mod(mdg4) and su(Hw). Isoform mod2.2 interacts with Trl/GAGA and interaction with this protein may bypass the repressive effects of the su(Hw) insulator.

Its subcellular location is the nucleus. The protein localises to the chromosome. Its function is as follows. Component of the gypsy chromatin insulator complex which is required for the function of the gypsy chromatin insulator and other endogenous chromatin insulators. Chromatin insulators are regulatory elements which establish independent domains of transcriptional activity within eukaryotic genomes. Insulators have two defining properties; they can block the communication between an enhancer and a promoter when placed between them and can also buffer transgenes from position effect variegation (PEV). Insulators are proposed to structure the chromatin fiber into independent domains of differing transcriptional potential by promoting the formation of distinct chromatin loops. This chromatin looping may involve the formation of insulator bodies, where homotypic interactions between individual subunits of the insulator complex could promote the clustering of widely spaced insulators at the nuclear periphery. Within the gypsy insulator complex, this protein may control the nature of the repressive effect of su(Hw): in the absence of mod(mdg4) protein, su(Hw) exerts a bidirectional silencing effect, whereas in the presence of mod(mdg4), the silencing effect is unidirectional. Isoform H is specifically required to maintain the pairing of achiasmate homologs in male meiosis I which is mediated by the rDNA repeats on the achiasmate X-Y bivalents. Isoform H also plays a role in apoptotic regulatory pathways. The protein is Modifier of mdg4 of Drosophila melanogaster (Fruit fly).